The sequence spans 1218 residues: Protein jagged-1 (1218 aa).

The N-terminal stretch at 1 to 33 is a signal peptide; it reads MRSPRTRGRSGRPLSLLLALLCALRAKVCGASG. The Extracellular segment spans residues 34–1067; it reads QFELEILSMQ…QRRPLKNRTD (1034 aa). N-linked (GlcNAc...) asparagine glycosylation is present at Asn-143. A DSL domain is found at 185–229; sequence VTCDDYYYGFGCNKFCRPRDDFFGHYACDQNGNKTCMEGWMGPEC. 2 disulfide bridges follow: Cys-187-Cys-196 and Cys-200-Cys-212. Positions 199–207 are important for interaction with NOTCH1; sequence FCRPRDDFF. An N-linked (GlcNAc...) asparagine glycan is attached at Asn-217. Cystine bridges form between Cys-220–Cys-229, Cys-234–Cys-245, Cys-238–Cys-251, Cys-253–Cys-262, Cys-265–Cys-276, Cys-271–Cys-282, Cys-284–Cys-293, Cys-300–Cys-312, Cys-306–Cys-322, Cys-324–Cys-333, Cys-340–Cys-351, Cys-345–Cys-360, Cys-362–Cys-371, Cys-378–Cys-389, Cys-383–Cys-398, Cys-400–Cys-409, Cys-416–Cys-427, Cys-421–Cys-436, Cys-438–Cys-447, Cys-454–Cys-464, Cys-458–Cys-473, Cys-475–Cys-484, Cys-491–Cys-502, Cys-496–Cys-511, Cys-513–Cys-522, Cys-529–Cys-540, Cys-534–Cys-549, Cys-551–Cys-560, Cys-578–Cys-605, Cys-599–Cys-615, Cys-617–Cys-626, Cys-633–Cys-644, Cys-638–Cys-653, Cys-655–Cys-664, Cys-671–Cys-682, Cys-676–Cys-691, Cys-693–Cys-702, Cys-709–Cys-720, Cys-714–Cys-729, and Cys-731–Cys-740. Positions 230–263 constitute an EGF-like 1 domain; it reads NRAICRQGCSPKHGSCKLPGDCRCQYGWQGLYCD. The EGF-like 2; atypical domain maps to 264–294; sequence KCIPHPGCVHGICNEPWQCLCETNWGGQLCD. EGF-like domains are found at residues 296-334 and 336-372; these read DLNY…PNCE and AEHA…PTCS. The 37-residue stretch at 374-410 folds into the EGF-like 5; calcium-binding domain; that stretch reads NIDDCSPNNCSHGGTCQDLVNGFKCVCPPQWTGKTCQ. Asn-382 is a glycosylation site (N-linked (GlcNAc...) asparagine). Positions 412 to 448 constitute an EGF-like 6; calcium-binding domain; that stretch reads DANECEAKPCVNAKSCKNLIASYYCDCLPGWMGQNCD. The EGF-like 7; calcium-binding domain occupies 450 to 485; that stretch reads NINDCLGQCQNDASCRDLVNGYRCICPPGYAGDHCE. Residues 487-523 form the EGF-like 8; calcium-binding domain; it reads DIDECASNPCLNGGHCQNEINRFQCLCPTGFSGNLCQ. EGF-like domains lie at 525–561 and 586–627; these read DIDY…KNCS and DTPE…TYCH. N-linked (GlcNAc...) asparagine glycosylation occurs at Asn-559. An EGF-like 11; calcium-binding domain is found at 629–665; the sequence is NINDCESNPCRNGGTCIDGVNSYKCICSDGWEGAYCE. The region spanning 667-703 is the EGF-like 12; calcium-binding domain; the sequence is NINDCSQNPCHNGGTCRDLVNDFYCDCKNGWKGKTCH. EGF-like domains lie at 705–741 and 744–780; these read RDSQ…TTCN and RNSS…PICA. Asn-745 carries N-linked (GlcNAc...) asparagine glycosylation. Intrachain disulfides connect Cys-748/Cys-759, Cys-753/Cys-768, Cys-770/Cys-779, Cys-786/Cys-797, Cys-791/Cys-806, Cys-808/Cys-817, Cys-824/Cys-835, Cys-829/Cys-844, and Cys-846/Cys-855. Positions 782–818 constitute an EGF-like 15; calcium-binding domain; the sequence is NTNDCSPHPCYNSGTCVDGDNWYRCECAPGFAGPDCR. In terms of domain architecture, EGF-like 16; calcium-binding spans 820 to 856; that stretch reads NINECQSSPCAFGATCVDEINGYRCVCPPGHSGAKCQ. Residues Asn-960, Asn-991, Asn-1045, and Asn-1064 are each glycosylated (N-linked (GlcNAc...) asparagine). Residues 1068-1093 form a helical membrane-spanning segment; sequence FLVPLLSSVLTVAWICCLVTAFYWCL. Residues 1094–1218 are Cytoplasmic-facing; sequence RKRRKPGSHT…QSLNRMEYIV (125 aa). The segment at 1152 to 1218 is disordered; that stretch reads HNSEVEEDDM…QSLNRMEYIV (67 aa). Over residues 1189 to 1199 the composition is skewed to polar residues; that stretch reads TPTKHPNWTNK.

As to quaternary structure, interacts with NOTCH2 and NOTCH3. Interacts with NOTCH1 (in the presence of calcium ions). As to expression, widely expressed in adult and fetal tissues. In cervix epithelium expressed in undifferentiated subcolumnar reserve cells and squamous metaplasia. Expression is up-regulated in cervical squamous cell carcinoma. Expressed in bone marrow cell line HS-27a which supports the long-term maintenance of immature progenitor cells.

It is found in the membrane. It localises to the cell membrane. In terms of biological role, ligand for multiple Notch receptors and involved in the mediation of Notch signaling. May be involved in cell-fate decisions during hematopoiesis. Seems to be involved in early and late stages of mammalian cardiovascular development. Inhibits myoblast differentiation. Enhances fibroblast growth factor-induced angiogenesis (in vitro). This Homo sapiens (Human) protein is Protein jagged-1 (JAG1).